We begin with the raw amino-acid sequence, 366 residues long: Holliday junction branch migration complex subunit RuvB (366 aa).

The segment at 1 to 49 (MAIISSKKQPPEPNGQPNKRPESAPSVPKEKVLQPEAAIDEQGKQEESI) is disordered. Residues 13–210 (PNGQPNKRPE…FGLIQKLRFY (198 aa)) form a large ATPase domain (RuvB-L) region. ATP-binding positions include I49, R50, G91, K94, T95, T96, 157-159 (EDY), R200, Y210, and R247. T95 serves as a coordination point for Mg(2+). The tract at residues 211–281 (EVDELSQIVL…IAAEALQLFQ (71 aa)) is small ATPAse domain (RuvB-S). Residues 284 to 366 (PCGLDWTDRR…TPPNEQLSLL (83 aa)) form a head domain (RuvB-H) region. R339 and R344 together coordinate DNA.

Belongs to the RuvB family. As to quaternary structure, homohexamer. Forms an RuvA(8)-RuvB(12)-Holliday junction (HJ) complex. HJ DNA is sandwiched between 2 RuvA tetramers; dsDNA enters through RuvA and exits via RuvB. An RuvB hexamer assembles on each DNA strand where it exits the tetramer. Each RuvB hexamer is contacted by two RuvA subunits (via domain III) on 2 adjacent RuvB subunits; this complex drives branch migration. In the full resolvosome a probable DNA-RuvA(4)-RuvB(12)-RuvC(2) complex forms which resolves the HJ.

It localises to the cytoplasm. The enzyme catalyses ATP + H2O = ADP + phosphate + H(+). Functionally, the RuvA-RuvB-RuvC complex processes Holliday junction (HJ) DNA during genetic recombination and DNA repair, while the RuvA-RuvB complex plays an important role in the rescue of blocked DNA replication forks via replication fork reversal (RFR). RuvA specifically binds to HJ cruciform DNA, conferring on it an open structure. The RuvB hexamer acts as an ATP-dependent pump, pulling dsDNA into and through the RuvAB complex. RuvB forms 2 homohexamers on either side of HJ DNA bound by 1 or 2 RuvA tetramers; 4 subunits per hexamer contact DNA at a time. Coordinated motions by a converter formed by DNA-disengaged RuvB subunits stimulates ATP hydrolysis and nucleotide exchange. Immobilization of the converter enables RuvB to convert the ATP-contained energy into a lever motion, pulling 2 nucleotides of DNA out of the RuvA tetramer per ATP hydrolyzed, thus driving DNA branch migration. The RuvB motors rotate together with the DNA substrate, which together with the progressing nucleotide cycle form the mechanistic basis for DNA recombination by continuous HJ branch migration. Branch migration allows RuvC to scan DNA until it finds its consensus sequence, where it cleaves and resolves cruciform DNA. In Nostoc sp. (strain PCC 7120 / SAG 25.82 / UTEX 2576), this protein is Holliday junction branch migration complex subunit RuvB.